The primary structure comprises 477 residues: Stromelysin-1 (477 aa).

Positions 1 to 17 (MKSLPILLLLCVAVCSA) are cleaved as a signal peptide. The propeptide at 18–99 (YPLDGAARGE…PRCGVPDVGH (82 aa)) is activation peptide. The Cysteine switch motif lies at 90-97 (PRCGVPDV). Cysteine 92 lines the Zn(2+) pocket. Ca(2+) contacts are provided by aspartate 124 and aspartate 158. Histidine 168 and aspartate 170 together coordinate Zn(2+). Ca(2+)-binding residues include aspartate 175, glycine 176, glycine 178, and valine 180. Histidine 183 contributes to the Zn(2+) binding site. Ca(2+) is bound by residues glycine 190, asparagine 192, and aspartate 194. Histidine 196 is a binding site for Zn(2+). Positions 198, 199, and 201 each coordinate Ca(2+). Zn(2+) is bound at residue histidine 218. Glutamate 219 is a catalytic residue. Zn(2+) is bound by residues histidine 222 and histidine 228. The disordered stretch occupies residues 262 to 287 (LYGPPPDSPETPLVPTEPVPPEPGTP). Residues 276 to 285 (PTEPVPPEPG) are compositionally biased toward pro residues. 4 Hemopexin repeats span residues 287 to 336 (PANC…WPSL), 337 to 383 (PSGV…GFPP), 385 to 433 (VRKI…FPGI), and 434 to 477 (DSKI…WLNC). Cysteine 290 and cysteine 477 are joined by a disulfide. Aspartate 297 provides a ligand contact to Ca(2+). The Ca(2+) site is built by aspartate 389 and aspartate 438.

This sequence belongs to the peptidase M10A family. The cofactor is Ca(2+). Zn(2+) is required as a cofactor. Post-translationally, directly cleaved by HTRA2 to produce active form.

The protein resides in the secreted. It localises to the extracellular space. It is found in the extracellular matrix. Its subcellular location is the nucleus. The protein localises to the cytoplasm. It catalyses the reaction Preferential cleavage where P1', P2' and P3' are hydrophobic residues.. With respect to regulation, enzymatic activity is activated by HTRA2 in dopaminergic cells upon mitochondrial stress. Functionally, metalloproteinase with a rather broad substrate specificity that can degrade fibronectin, laminin, gelatins of type I, III, IV, and V; collagens III, IV, X, and IX, and cartilage proteoglycans. Activates different molecules including growth factors, plasminogen or other matrix metalloproteinases such as MMP9. Once released into the extracellular matrix (ECM), the inactive pro-enzyme is activated by the plasmin cascade signaling pathway. Also acts intracellularly. For example, in dopaminergic neurons, gets activated by the serine protease HTRA2 upon stress and plays a pivotal role in DA neuronal degeneration by mediating microglial activation and alpha-synuclein/SNCA cleavage. In addition, plays a role in immune response and possesses antiviral activity against various viruses such as vesicular stomatitis virus, influenza A virus (H1N1) and human herpes virus 1. Mechanistically, translocates from the cytoplasm into the cell nucleus upon virus infection to influence NF-kappa-B activities. This Homo sapiens (Human) protein is Stromelysin-1 (MMP3).